The primary structure comprises 349 residues: tRNA pseudouridine synthase D (349 aa).

Phe-27 provides a ligand contact to substrate. The active-site Nucleophile is Asp-80. Substrate is bound at residue Asn-129. Residues 155–303 (GVPNYFGAQR…VEASRRAMLL (149 aa)) enclose the TRUD domain. Phe-329 provides a ligand contact to substrate.

Belongs to the pseudouridine synthase TruD family.

The enzyme catalyses uridine(13) in tRNA = pseudouridine(13) in tRNA. Responsible for synthesis of pseudouridine from uracil-13 in transfer RNAs. The chain is tRNA pseudouridine synthase D from Salmonella choleraesuis (strain SC-B67).